We begin with the raw amino-acid sequence, 431 residues long: Tol-Pal system protein TolB (431 aa).

The first 18 residues, 1–18 (MKALLLSLLLLLPVVALA), serve as a signal peptide directing secretion. The tract at residues 410 to 431 (LPLRTEKGTYQTPDWSPLPQAQ) is disordered.

Belongs to the TolB family. In terms of assembly, the Tol-Pal system is composed of five core proteins: the inner membrane proteins TolA, TolQ and TolR, the periplasmic protein TolB and the outer membrane protein Pal. They form a network linking the inner and outer membranes and the peptidoglycan layer.

It localises to the periplasm. Its function is as follows. Part of the Tol-Pal system, which plays a role in outer membrane invagination during cell division and is important for maintaining outer membrane integrity. The polypeptide is Tol-Pal system protein TolB (Myxococcus xanthus).